A 199-amino-acid chain; its full sequence is Nuclear protein UL4 (199 aa).

Belongs to the alphaherpesvirinae HHV-1 UL4 family.

Its subcellular location is the host nucleus. The polypeptide is Nuclear protein UL4 (Homo sapiens (Human)).